The following is a 494-amino-acid chain: Cobyric acid synthase (494 aa).

The GATase cobBQ-type domain occupies 254–453 (KQTVAVIAYP…LHGLFEDPGA (200 aa)). Cys-338 acts as the Nucleophile in catalysis. The active site involves His-445.

Belongs to the CobB/CobQ family. CobQ subfamily.

Its pathway is cofactor biosynthesis; adenosylcobalamin biosynthesis. In terms of biological role, catalyzes amidations at positions B, D, E, and G on adenosylcobyrinic A,C-diamide. NH(2) groups are provided by glutamine, and one molecule of ATP is hydrogenolyzed for each amidation. In Albidiferax ferrireducens (strain ATCC BAA-621 / DSM 15236 / T118) (Rhodoferax ferrireducens), this protein is Cobyric acid synthase.